Reading from the N-terminus, the 233-residue chain is Probable O-methyltransferase Rv1703c (233 aa).

S-adenosyl-L-methionine-binding positions include Val-55, Glu-77, Gly-79–Thr-80, and Glu-102. Asp-157 is an a divalent metal cation binding site. Residue Asp-159 coordinates S-adenosyl-L-methionine. Asp-185 and Asn-186 together coordinate a divalent metal cation.

It belongs to the class I-like SAM-binding methyltransferase superfamily. Cation-dependent O-methyltransferase family.

In terms of biological role, specifically methylates an O atom of its substrate. This Mycobacterium tuberculosis (strain ATCC 25618 / H37Rv) protein is Probable O-methyltransferase Rv1703c.